The following is a 61-amino-acid chain: AKDGDFEGPPGCLKMGELCKGGTCCTKVYKYWKWRKLECLGKNDGWFKKKFICDEPCNPXX.

Cystine bridges form between Cys-12–Cys-25, Cys-19–Cys-39, and Cys-24–Cys-53.

This sequence belongs to the neurotoxin 26 (DTX) family. As to expression, expressed by the venom gland.

Its subcellular location is the secreted. Its function is as follows. Acts by delaying the inactivation of presynaptic voltage-sensitive sodium channels (Nav). Acts against insects and causes a progressive spastic paralysis. This is Mu-diguetoxin-Dc1c from Diguetia canities (Desert bush spider).